Consider the following 277-residue polypeptide: Bis(5'-nucleosyl)-tetraphosphatase, symmetrical (277 aa).

The protein belongs to the Ap4A hydrolase family.

It catalyses the reaction P(1),P(4)-bis(5'-adenosyl) tetraphosphate + H2O = 2 ADP + 2 H(+). Its function is as follows. Hydrolyzes diadenosine 5',5'''-P1,P4-tetraphosphate to yield ADP. The sequence is that of Bis(5'-nucleosyl)-tetraphosphatase, symmetrical from Chromobacterium violaceum (strain ATCC 12472 / DSM 30191 / JCM 1249 / CCUG 213 / NBRC 12614 / NCIMB 9131 / NCTC 9757 / MK).